The sequence spans 333 residues: uncharacterized protein (333 aa).

The first 23 residues, 1–23 (MSRSFMIILTIMLIALSLGEVLA), serve as a signal peptide directing secretion. The chain crosses the membrane as a helical span at residues 232 to 252 (SFFLGVLVTLMILSPVIVYLW).

The protein resides in the membrane. This is an uncharacterized protein from Pyrococcus abyssi (strain GE5 / Orsay).